The following is a 121-amino-acid chain: Ribonuclease P protein component (121 aa).

The protein belongs to the RnpA family. In terms of assembly, consists of a catalytic RNA component (M1 or rnpB) and a protein subunit.

It catalyses the reaction Endonucleolytic cleavage of RNA, removing 5'-extranucleotides from tRNA precursor.. Functionally, RNaseP catalyzes the removal of the 5'-leader sequence from pre-tRNA to produce the mature 5'-terminus. It can also cleave other RNA substrates such as 4.5S RNA. The protein component plays an auxiliary but essential role in vivo by binding to the 5'-leader sequence and broadening the substrate specificity of the ribozyme. The chain is Ribonuclease P protein component from Oceanobacillus iheyensis (strain DSM 14371 / CIP 107618 / JCM 11309 / KCTC 3954 / HTE831).